The sequence spans 455 residues: Bifunctional protein GlmU (455 aa).

Positions 1–227 (MGLSVIILAA…CEEVQGVNDR (227 aa)) are pyrophosphorylase. UDP-N-acetyl-alpha-D-glucosamine is bound by residues 8–11 (LAAG), lysine 22, glutamine 73, 78–79 (GT), 100–102 (YGD), glycine 137, glutamate 152, asparagine 167, and asparagine 225. Aspartate 102 lines the Mg(2+) pocket. Position 225 (asparagine 225) interacts with Mg(2+). The interval 228-248 (WELTKLERYYQRLMAKKLSLA) is linker. The tract at residues 249-455 (GVTIIDPERF…KGWHRPTKKE (207 aa)) is N-acetyltransferase. UDP-N-acetyl-alpha-D-glucosamine contacts are provided by arginine 332 and lysine 350. Histidine 362 (proton acceptor) is an active-site residue. Positions 365 and 376 each coordinate UDP-N-acetyl-alpha-D-glucosamine. Acetyl-CoA is bound by residues alanine 379, 385–386 (NY), serine 404, alanine 422, and arginine 439.

The protein in the N-terminal section; belongs to the N-acetylglucosamine-1-phosphate uridyltransferase family. It in the C-terminal section; belongs to the transferase hexapeptide repeat family. In terms of assembly, homotrimer. Mg(2+) is required as a cofactor.

Its subcellular location is the cytoplasm. The catalysed reaction is alpha-D-glucosamine 1-phosphate + acetyl-CoA = N-acetyl-alpha-D-glucosamine 1-phosphate + CoA + H(+). It catalyses the reaction N-acetyl-alpha-D-glucosamine 1-phosphate + UTP + H(+) = UDP-N-acetyl-alpha-D-glucosamine + diphosphate. It functions in the pathway nucleotide-sugar biosynthesis; UDP-N-acetyl-alpha-D-glucosamine biosynthesis; N-acetyl-alpha-D-glucosamine 1-phosphate from alpha-D-glucosamine 6-phosphate (route II): step 2/2. It participates in nucleotide-sugar biosynthesis; UDP-N-acetyl-alpha-D-glucosamine biosynthesis; UDP-N-acetyl-alpha-D-glucosamine from N-acetyl-alpha-D-glucosamine 1-phosphate: step 1/1. Its pathway is bacterial outer membrane biogenesis; LPS lipid A biosynthesis. In terms of biological role, catalyzes the last two sequential reactions in the de novo biosynthetic pathway for UDP-N-acetylglucosamine (UDP-GlcNAc). The C-terminal domain catalyzes the transfer of acetyl group from acetyl coenzyme A to glucosamine-1-phosphate (GlcN-1-P) to produce N-acetylglucosamine-1-phosphate (GlcNAc-1-P), which is converted into UDP-GlcNAc by the transfer of uridine 5-monophosphate (from uridine 5-triphosphate), a reaction catalyzed by the N-terminal domain. The protein is Bifunctional protein GlmU of Coxiella burnetii (strain CbuK_Q154) (Coxiella burnetii (strain Q154)).